Consider the following 389-residue polypeptide: Very-long-chain 3-oxoacyl-CoA reductase (389 aa).

Residues 34 to 54 (IAVFLLAIGLFHVALKVVSYV) traverse the membrane as a helical segment. Positions 80, 134, 162, 239, 243, 272, and 274 each coordinate NADP(+). Y239 (proton donor) is an active-site residue. K243 acts as the Lowers pKa of active site Tyr in catalysis. A disordered region spans residues 359 to 389 (QAAGGVADPKNTTAAREGYATESLKNETLKH).

The protein belongs to the short-chain dehydrogenases/reductases (SDR) family.

Its subcellular location is the endoplasmic reticulum membrane. The enzyme catalyses a very-long-chain (3R)-3-hydroxyacyl-CoA + NADP(+) = a very-long-chain 3-oxoacyl-CoA + NADPH + H(+). Its pathway is lipid metabolism; fatty acid biosynthesis. Its function is as follows. Component of the microsomal membrane bound fatty acid elongation system, which produces the 26-carbon very long-chain fatty acids (VLCFA) from palmitate. Catalyzes the reduction of the 3-ketoacyl-CoA intermediate that is formed in each cycle of fatty acid elongation. VLCFAs serve as precursors for ceramide and sphingolipids. The protein is Very-long-chain 3-oxoacyl-CoA reductase of Yarrowia lipolytica (strain CLIB 122 / E 150) (Yeast).